Consider the following 222-residue polypeptide: Ribose-5-phosphate isomerase A (222 aa).

Substrate-binding positions include Thr-29 to Thr-32, Asp-82 to Asp-85, and Lys-95 to Gly-98. The active-site Proton acceptor is Glu-104. A substrate-binding site is contributed by Lys-122.

This sequence belongs to the ribose 5-phosphate isomerase family. Homodimer.

The enzyme catalyses aldehydo-D-ribose 5-phosphate = D-ribulose 5-phosphate. The protein operates within carbohydrate degradation; pentose phosphate pathway; D-ribose 5-phosphate from D-ribulose 5-phosphate (non-oxidative stage): step 1/1. Functionally, catalyzes the reversible conversion of ribose-5-phosphate to ribulose 5-phosphate. This Blochmanniella floridana protein is Ribose-5-phosphate isomerase A.